Reading from the N-terminus, the 176-residue chain is Adenine phosphoribosyltransferase (176 aa).

Belongs to the purine/pyrimidine phosphoribosyltransferase family. Homodimer.

Its subcellular location is the cytoplasm. The enzyme catalyses AMP + diphosphate = 5-phospho-alpha-D-ribose 1-diphosphate + adenine. It participates in purine metabolism; AMP biosynthesis via salvage pathway; AMP from adenine: step 1/1. Functionally, catalyzes a salvage reaction resulting in the formation of AMP, that is energically less costly than de novo synthesis. This is Adenine phosphoribosyltransferase from Borrelia garinii subsp. bavariensis (strain ATCC BAA-2496 / DSM 23469 / PBi) (Borreliella bavariensis).